The chain runs to 142 residues: Hemoglobin subunit alpha-5 (142 aa).

Positions threonine 2–arginine 142 constitute a Globin domain. Histidine 59 lines the O2 pocket. Residue histidine 88 participates in heme b binding.

The protein belongs to the globin family. As to quaternary structure, heterotetramer of two alpha chains and two beta chains. Red blood cells.

This is a larval (tadpole) alpha-globin. This chain is Hemoglobin subunit alpha-5 (hba5), found in Xenopus laevis (African clawed frog).